The following is a 677-amino-acid chain: MNGVEVPAKIQKRIERLRQEINDHNYRYYVLSQPTIPDSVYDELFHELQKLEKKYPETITPSSPTQRVGAEPLKVFEPVHHEIPMLSLDNVFDEKGLRAFDKRIRQRLKLDKPFEYVCEPKMDGVALSLLYENGELIRAATRGDGYTGENVTQNTRTIASVPLQLRGNDYPELVEIRGEVLMPREGFAKFNREAEKRGDKTFANPRNAASGSLRQLDPRITAKRPLIFYGYLIGLLKGKDFPKNHCDVLKWFKDWGIPVISEIKVVGGIEGCLDYYEHLVKTREKMPFDIDGIVIKVNSLQVQAELGFVSRAPRWAIAYKFPAQEKMTVVKAIEFQVGRTGAVTPVARLEPVSVSGVTVSNATLHNFDELYRKDVRVGDTVIVRRAGDVIPEVVGPILAKRPKKAKLIKIPSRCPVCHAEVIKPEGEAVARCVGGLYCRAQLRESIKHFASRRALDIEGLGDKLVELFIQEKLIKDITGIYQLKKSAITALPRMGEKSAENLLTAIEKSKKTTLPRFLYALGIRGVGDTTARTLARHFHELDLLMKASIETLQEIRDIGPVAAENIHAFFHQKHNAELINKLIHLGVHWPQEKAVVKSEIAGKTFVLTGALKSLTREEAEEKIERSGGKATSSVSKNTDYVIVGENPGSKYEKAKALGISLIDEEAFLKLLKSKGVF.

NAD(+) is bound by residues 38-42 (DSVYD), 87-88 (SL), and Glu119. The active-site N6-AMP-lysine intermediate is the Lys121. Arg142, Glu179, Lys296, and Lys320 together coordinate NAD(+). Residues Cys414, Cys417, Cys432, and Cys438 each contribute to the Zn(2+) site. A BRCT domain is found at 595–677 (VVKSEIAGKT…LKLLKSKGVF (83 aa)).

This sequence belongs to the NAD-dependent DNA ligase family. LigA subfamily. Mg(2+) serves as cofactor. The cofactor is Mn(2+).

The enzyme catalyses NAD(+) + (deoxyribonucleotide)n-3'-hydroxyl + 5'-phospho-(deoxyribonucleotide)m = (deoxyribonucleotide)n+m + AMP + beta-nicotinamide D-nucleotide.. DNA ligase that catalyzes the formation of phosphodiester linkages between 5'-phosphoryl and 3'-hydroxyl groups in double-stranded DNA using NAD as a coenzyme and as the energy source for the reaction. It is essential for DNA replication and repair of damaged DNA. The chain is DNA ligase from Coxiella burnetii (strain CbuG_Q212) (Coxiella burnetii (strain Q212)).